Here is a 445-residue protein sequence, read N- to C-terminus: Phosphoglucosamine mutase (445 aa).

Catalysis depends on serine 102, which acts as the Phosphoserine intermediate. Positions 102, 241, 243, and 245 each coordinate Mg(2+). Serine 102 is modified (phosphoserine).

The protein belongs to the phosphohexose mutase family. Mg(2+) serves as cofactor. Activated by phosphorylation.

It carries out the reaction alpha-D-glucosamine 1-phosphate = D-glucosamine 6-phosphate. In terms of biological role, catalyzes the conversion of glucosamine-6-phosphate to glucosamine-1-phosphate. The protein is Phosphoglucosamine mutase of Acinetobacter baumannii (strain AB0057).